A 241-amino-acid chain; its full sequence is Neuroendocrine secretory protein 55 (241 aa).

Positions 1–46 are cleaved as a signal peptide; the sequence is MDRRSRPQLGRRARHNYNDLCPPIGRRAATALLWLSCSIALLRALA. A disordered region spans residues 71-241; sequence AAQVFPEPPE…KRGAIPIRRH (171 aa). Over residues 97–125 the composition is skewed to acidic residues; sequence EYQEEEFDYESETESESEIESETEFETES. Residues 167-177 show a composition bias toward low complexity; the sequence is PDASPSRAPPS. Positions 182-198 are enriched in basic and acidic residues; it reads ESPRQGEEPEDKDPRDP. Positions 212–221 are enriched in basic residues; sequence QHRCKPKKPT.

It belongs to the NESP55 family. Binds keratan sulfate chains. Post-translationally, may be proteolytically processed to give rise to a number of active peptides. As to expression, highly expressed in adrenal medulla and anterior and posterior pituitary. In the brain, detected in hypothalamus, hippocampus, caudate nucleus, thalamus and, in significantly lower amounts, in the cerebellum.

The protein localises to the cytoplasmic vesicle. It is found in the secretory vesicle. Its subcellular location is the secreted. The sequence is that of Neuroendocrine secretory protein 55 from Bos taurus (Bovine).